Reading from the N-terminus, the 420-residue chain is Tyrosine--tRNA ligase (420 aa).

Residue Y33 participates in L-tyrosine binding. The 'HIGH' region signature appears at 38–47; that stretch reads PTADSLHVGH. Y167 and Q171 together coordinate L-tyrosine. Positions 227–231 match the 'KMSKS' region motif; that stretch reads KFGKT. K230 contacts ATP. Residues 353-419 form the S4 RNA-binding domain; the sequence is LTVADLLVKV…GKRNYALVKV (67 aa).

The protein belongs to the class-I aminoacyl-tRNA synthetase family. TyrS type 1 subfamily. As to quaternary structure, homodimer.

It is found in the cytoplasm. The enzyme catalyses tRNA(Tyr) + L-tyrosine + ATP = L-tyrosyl-tRNA(Tyr) + AMP + diphosphate + H(+). Its function is as follows. Catalyzes the attachment of tyrosine to tRNA(Tyr) in a two-step reaction: tyrosine is first activated by ATP to form Tyr-AMP and then transferred to the acceptor end of tRNA(Tyr). The chain is Tyrosine--tRNA ligase from Anaeromyxobacter dehalogenans (strain 2CP-1 / ATCC BAA-258).